The chain runs to 405 residues: FAD-dependent monooxygenase thnD (405 aa).

Residues glutamate 30, alanine 45, arginine 106, aspartate 308, and glycine 321 each contribute to the FAD site.

It belongs to the paxM FAD-dependent monooxygenase family. The cofactor is FAD.

In terms of biological role, FAD-dependent monooxygenase; part of the gene cluster that produces the tetronate natural products trihazones. Transcription analysis of thnD confirmed this gene is expressed, hence its role in the biosynthetic pathway remains cryptic. The pathway begins with the formation of trihazone A by the hybrid PKS-NRPS synthetase thnA and the trans-enoyl reductase thnE. Trihazone A is further decarboxylated by the 2-oxoglutarate-dependent dioxygenase thnC to produce trihazone D. The function of the FAD-dependent monooxygenase thnD has still to be identified. This Trichoderma harzianum (Hypocrea lixii) protein is FAD-dependent monooxygenase thnD.